Reading from the N-terminus, the 108-residue chain is UPF0060 membrane protein YnfA (108 aa).

At 1–5 the chain is on the periplasmic side; the sequence is MLKTT. The helical transmembrane segment at 6–26 threads the bilayer; sequence LLFFVTALCEIIGCFLPWLWL. Residues 27–30 are Cytoplasmic-facing; that stretch reads KRGA. Residues 31 to 51 form a helical membrane-spanning segment; it reads SMWWLLPAAASLALFVWLLTL. Over 52–60 the chain is Periplasmic; that stretch reads HPAASGRVY. A helical transmembrane segment spans residues 61–81; the sequence is AAYGGVYVCTALLWLRVVDGV. The Cytoplasmic segment spans residues 82-84; the sequence is RLT. A helical transmembrane segment spans residues 85–105; that stretch reads VYDWCGALIALCGMLIIVVGW. Topologically, residues 106–108 are periplasmic; it reads GRT.

The protein belongs to the UPF0060 family.

It is found in the cell inner membrane. The sequence is that of UPF0060 membrane protein YnfA from Salmonella schwarzengrund (strain CVM19633).